The primary structure comprises 135 residues: Gene 52 protein (135 aa).

Disordered regions lie at residues 1-20 (MASG…PTPE) and 110-135 (LGGR…AEKQ). Residues 122-135 (SKPRGRSKHRAEKQ) show a composition bias toward basic residues.

It belongs to the herpesviridae BLRF2 family.

This is Gene 52 protein (52) from Equine herpesvirus 2 (strain 86/87) (EHV-2).